A 141-amino-acid chain; its full sequence is Transcriptional regulator MraZ (141 aa).

SpoVT-AbrB domains follow at residues 5–47 (TFNL…KPAD) and 76–119 (ANLV…DKVQ).

This sequence belongs to the MraZ family. In terms of assembly, forms oligomers.

It is found in the cytoplasm. It localises to the nucleoid. The protein is Transcriptional regulator MraZ of Mycoplasma genitalium (strain ATCC 33530 / DSM 19775 / NCTC 10195 / G37) (Mycoplasmoides genitalium).